A 228-amino-acid polypeptide reads, in one-letter code: Protein CWC15 homolog A (228 aa).

Residues 1–126 are disordered; sequence MTTAARPTFE…DEDSDDDTAA (126 aa). The span at 24–34 shows a compositional bias: polar residues; it reads SQLSKQYSSRD. Basic and acidic residues predominate over residues 52-84; that stretch reads EEVRSRDFRRELEERERVVARDKNRDRPTREHT. Acidic residues predominate over residues 102-124; the sequence is DADDPLTDEDGDEDSDEDSDDDT. A coiled-coil region spans residues 121-165; sequence DDDTAALLAELEKIKKERAEEKDRKELEQKAEEERIRMENILSGN.

Belongs to the CWC15 family. Identified in the spliceosome C complex. Component of the minor spliceosome, which splices U12-type introns.

The protein resides in the nucleus. Its function is as follows. Involved in pre-mRNA splicing as component of the spliceosome. The sequence is that of Protein CWC15 homolog A (cwc15-a) from Xenopus laevis (African clawed frog).